Here is a 542-residue protein sequence, read N- to C-terminus: MTSIINQRWPLGNLMDGFPNGEKQNKLSFGGVPEKGYFEEFNKDPKYISFSGTPEKAYFEEFNRYRNIDEDDNRDTFPLFNEISSNPESESYLQTFVDNVRINTDINFVSKTNSFSQNDLSYLNATYVDKSLSLELPIKFNWAKTTSADSPDVVAKKKLISKPDNQYLCGSCWAVSVAGVVGDVFAVAGLVNWVPNISATYALIHYPQGRCKGGDPATLLYNIANNGIPSKHCVDYSWCSQNRTCTTADSAAHFGSDLSPLIPKDRGCYFDSEHYIFKIDSNIRTIVAGSGAIDVSNVQRTIKEYIYTTGPAVGGYIIFRNFTSKVPFGPHKGNSTFNVINGGVYLEKANYAQYRGEYGEHITEGLTFSSSNTDSDNYAGGHAISIMGWGIQPRIRVGNGPNDIADVPYWYCRNSWGTKWGMNGGYFKIAMYPYNRKSQFSKIVELMTPQGQHIRLGGVLAFTVSNPPVLKKLPANKQPPNPNSLSKLLDYYKNDEDDIVTKLPNIVPPSDGKKSTTSKTNNWYIYALIIIFILIIFFVLRK.

Active-site residues include C172, H382, and N414. A helical transmembrane segment spans residues 520 to 540 (TNNWYIYALIIIFILIIFFVL).

It belongs to the peptidase C1 family.

The protein resides in the membrane. In terms of biological role, probable cysteine protease. This chain is Probable cysteine proteinase 361L, found in Acheta domesticus (House cricket).